The sequence spans 136 residues: Small ribosomal subunit protein eS19 (136 aa).

Lys23 carries the post-translational modification N6-acetyllysine. Arg67 carries the post-translational modification Omega-N-methylarginine. N6-acetyllysine is present on residues Lys111 and Lys115. Residues Asp116–Gly136 form a disordered region.

Belongs to the eukaryotic ribosomal protein eS19 family. In terms of assembly, component of the small ribosomal subunit. Part of the small subunit (SSU) processome, composed of more than 70 proteins and the RNA chaperone small nucleolar RNA (snoRNA) U3. Interacts with RPS19BP1; the interaction is direct and mediates the integration of RPS19 in state post-A1. Interacts with RPS19BP1.

The protein localises to the cytoplasm. Its subcellular location is the nucleus. It is found in the nucleolus. Functionally, component of the small ribosomal subunit. The ribosome is a large ribonucleoprotein complex responsible for the synthesis of proteins in the cell. Required for pre-rRNA processing and maturation of 40S ribosomal subunits. Part of the small subunit (SSU) processome, first precursor of the small eukaryotic ribosomal subunit. During the assembly of the SSU processome in the nucleolus, many ribosome biogenesis factors, an RNA chaperone and ribosomal proteins associate with the nascent pre-rRNA and work in concert to generate RNA folding, modifications, rearrangements and cleavage as well as targeted degradation of pre-ribosomal RNA by the RNA exosome. In Sus scrofa (Pig), this protein is Small ribosomal subunit protein eS19 (RPS19).